The sequence spans 296 residues: Nucleotide-binding protein M6_Spy0559 (296 aa).

13–20 (GMSGAGKT) contacts ATP. 63–66 (DMRS) contacts GTP.

It belongs to the RapZ-like family.

In terms of biological role, displays ATPase and GTPase activities. The chain is Nucleotide-binding protein M6_Spy0559 from Streptococcus pyogenes serotype M6 (strain ATCC BAA-946 / MGAS10394).